Here is a 1024-residue protein sequence, read N- to C-terminus: Protein sumv-1 (1024 aa).

Disordered regions lie at residues 447–486, 501–564, 577–617, 645–664, 710–739, and 773–1024; these read DASQ…KKMP, NFQG…RRGV, PSRH…RSQA, SQMA…GSPQ, VRSG…DTVQ, and AGNS…EEEL. Polar residues-rich tracts occupy residues 467-486, 501-514, and 528-542; these read SFGT…KKMP, NFQG…SSAT, and RSQQ…QTQD. The span at 584 to 600 shows a compositional bias: low complexity; the sequence is SPLTPSTSTSSSQLLAP. The segment covering 605-617 has biased composition (polar residues); that stretch reads QPGTSSQTFRSQA. Low complexity-rich tracts occupy residues 710-730 and 784-809; these read VRSG…ASGS and AGAP…ASTS. Polar residues predominate over residues 810 to 832; it reads VPEPTKSSESSVDPQSDVSFSNP. The segment covering 859-870 has biased composition (low complexity); it reads TLASESTSSEAT. The span at 873-883 shows a compositional bias: polar residues; that stretch reads HDTTSSSSAET. Residues 903–914 are compositionally biased toward basic and acidic residues; sequence PEKEKEKIDRPK. Low complexity-rich tracts occupy residues 916 to 943, 952 to 962, and 970 to 986; these read PKSS…NQAI, SASTSSSAAST, and LLAE…QQQA. A compositionally biased stretch (polar residues) spans 987–998; the sequence is IGSTSKNGGSTK.

It localises to the nucleus. It is found in the cytoplasm. Its subcellular location is the cell projection. The protein resides in the axon. Nuclear factor that influences the activity of genes involved in vulval development. This is Protein sumv-1 from Caenorhabditis elegans.